Reading from the N-terminus, the 184-residue chain is 20.9 kDa protein (184 aa).

The chain is 20.9 kDa protein from Zymomonas mobilis subsp. mobilis (strain ATCC 10988 / DSM 424 / LMG 404 / NCIMB 8938 / NRRL B-806 / ZM1).